The following is a 244-amino-acid chain: MRRVAVIIPARFGAQRFPGKPLADLAGQPLIAHVVDRARRARGVDAVAVATDDARIAAAAEAAGAAAILTGPASTGTDRVAEAARKLMPSPDVVVNLQGDEPLIEPEAIETLVRAMEGGVEMATLARPLEPEELERTQVVKVVTDRHGDALYFSRAPIPHRRAGGVSALARAHVGIYAFTAAFLQEFAALPPGRLEAEESLEQLRALEHGHRIRVADTAYRGFGIDTPEDLDRARALLAAGPRE.

It belongs to the KdsB family.

The protein localises to the cytoplasm. The catalysed reaction is 3-deoxy-alpha-D-manno-oct-2-ulosonate + CTP = CMP-3-deoxy-beta-D-manno-octulosonate + diphosphate. It participates in nucleotide-sugar biosynthesis; CMP-3-deoxy-D-manno-octulosonate biosynthesis; CMP-3-deoxy-D-manno-octulosonate from 3-deoxy-D-manno-octulosonate and CTP: step 1/1. It functions in the pathway bacterial outer membrane biogenesis; lipopolysaccharide biosynthesis. Functionally, activates KDO (a required 8-carbon sugar) for incorporation into bacterial lipopolysaccharide in Gram-negative bacteria. The sequence is that of 3-deoxy-manno-octulosonate cytidylyltransferase from Anaeromyxobacter sp. (strain Fw109-5).